The primary structure comprises 304 residues: Protein translocase subunit SecF (304 aa).

A run of 6 helical transmembrane segments spans residues 20–40, 143–163, 164–184, 195–215, 244–266, and 276–298; these read AKLF…LIFT, AMMA…IRFE, LIFA…TLGF, TVVA…IVVF, LSRT…IFGG, and LVIG…VYLI.

This sequence belongs to the SecD/SecF family. SecF subfamily. Forms a complex with SecD. Part of the essential Sec protein translocation apparatus which comprises SecA, SecYEG and auxiliary proteins SecDF. Other proteins may also be involved.

The protein localises to the cell inner membrane. In terms of biological role, part of the Sec protein translocase complex. Interacts with the SecYEG preprotein conducting channel. SecDF uses the proton motive force (PMF) to complete protein translocation after the ATP-dependent function of SecA. The chain is Protein translocase subunit SecF from Calditerrivibrio nitroreducens (strain DSM 19672 / NBRC 101217 / Yu37-1).